A 321-amino-acid chain; its full sequence is Malate dehydrogenase (321 aa).

Residues 10-15 (GAGQIG) and Asp-34 each bind NAD(+). Substrate contacts are provided by Arg-83 and Arg-89. NAD(+) contacts are provided by residues Asn-96 and 119 to 121 (ITN). Substrate-binding residues include Asn-121 and Arg-152. His-176 (proton acceptor) is an active-site residue.

The protein belongs to the LDH/MDH superfamily. MDH type 3 family.

It catalyses the reaction (S)-malate + NAD(+) = oxaloacetate + NADH + H(+). Catalyzes the reversible oxidation of malate to oxaloacetate. This chain is Malate dehydrogenase, found in Methylocella silvestris (strain DSM 15510 / CIP 108128 / LMG 27833 / NCIMB 13906 / BL2).